The sequence spans 498 residues: AP2-like ethylene-responsive transcription factor AIL7 (498 aa).

Residues 186-195 (TSDQPLSCNN) show a composition bias toward polar residues. The disordered stretch occupies residues 186-220 (TSDQPLSCNNGERGGNSNKKKTVSKKETSDDSKKK). Over residues 209–220 (SKKETSDDSKKK) the composition is skewed to basic and acidic residues. 2 consecutive DNA-binding regions (AP2/ERF) follow at residues 231-297 (IYRG…TNFP) and 333-391 (IYRG…TNFE). The span at 422 to 451 (ESPSSSSSDHNLQQQQLLPSSSPSDQNPNS) shows a compositional bias: low complexity. Residues 422-452 (ESPSSSSSDHNLQQQQLLPSSSPSDQNPNSI) form a disordered region.

The protein belongs to the AP2/ERF transcription factor family. AP2 subfamily. As to quaternary structure, interacts with HDG2, and possibly with HDG3, HDG7, ANL2, ATML1 and PDF2. In terms of tissue distribution, expressed in roots, seedlings, inflorescence, and siliques. Also detected at low levels in leaves.

It is found in the nucleus. Its function is as follows. Probably acts as a transcriptional activator. Binds to the GCC-box pathogenesis-related promoter element. May be involved in the regulation of gene expression by stress factors and by components of stress signal transduction pathways. This Arabidopsis thaliana (Mouse-ear cress) protein is AP2-like ethylene-responsive transcription factor AIL7.